A 300-amino-acid chain; its full sequence is Cation-efflux pump FieF (300 aa).

4 consecutive transmembrane segments (helical) span residues 11–31 (LAAVSATAVALVLFIMKVFAW), 40–60 (LASLVDSLVDIAASLVNLLVV), 81–101 (LAALAQSMFISGSALFLILTG), and 114–134 (PEVGMWVTLIALVATLLLVSF). Positions 45 and 49 each coordinate Zn(2+). Zn(2+) contacts are provided by His-153 and Asp-157. Helical transmembrane passes span 156–176 (SDLLMNGAILVALALSWKGIT) and 182–202 (FALGIGGYILYSALRMGYDAV).

It belongs to the cation diffusion facilitator (CDF) transporter (TC 2.A.4) family. FieF subfamily. As to quaternary structure, homodimer.

It localises to the cell inner membrane. The enzyme catalyses Zn(2+)(in) + H(+)(out) = Zn(2+)(out) + H(+)(in). It carries out the reaction Cd(2+)(in) + H(+)(out) = Cd(2+)(out) + H(+)(in). It catalyses the reaction Fe(2+)(in) + H(+)(out) = Fe(2+)(out) + H(+)(in). Its function is as follows. Divalent metal cation transporter which exports Zn(2+), Cd(2+) and possibly Fe(2+). May be involved in zinc and iron detoxification by efflux. This is Cation-efflux pump FieF from Pectobacterium carotovorum subsp. carotovorum (strain PC1).